Reading from the N-terminus, the 283-residue chain is Pantothenate synthetase (283 aa).

30–37 provides a ligand contact to ATP; sequence MGNLHDGH. The active-site Proton donor is histidine 37. Glutamine 61 is a binding site for (R)-pantoate. Glutamine 61 serves as a coordination point for beta-alanine. 149 to 152 contacts ATP; it reads GEKD. (R)-pantoate is bound at residue glutamine 155. An ATP-binding site is contributed by 186–189; it reads LSSR.

It belongs to the pantothenate synthetase family. As to quaternary structure, homodimer.

It localises to the cytoplasm. The catalysed reaction is (R)-pantoate + beta-alanine + ATP = (R)-pantothenate + AMP + diphosphate + H(+). The protein operates within cofactor biosynthesis; (R)-pantothenate biosynthesis; (R)-pantothenate from (R)-pantoate and beta-alanine: step 1/1. Its function is as follows. Catalyzes the condensation of pantoate with beta-alanine in an ATP-dependent reaction via a pantoyl-adenylate intermediate. This is Pantothenate synthetase from Escherichia coli (strain ATCC 8739 / DSM 1576 / NBRC 3972 / NCIMB 8545 / WDCM 00012 / Crooks).